The chain runs to 262 residues: Flap endonuclease Xni (262 aa).

Asp105 is a Mg(2+) binding site. The region spanning 162-257 (ERSQFLDLMA…FRVIDSPPEK (96 aa)) is the 5'-3' exonuclease domain. Leu172, Ala173, Pro181, Ile183, and Ile186 together coordinate K(+). Residues 185-190 (GIGPKS) form an interaction with DNA region.

Belongs to the Xni family. Requires Mg(2+) as cofactor. The cofactor is K(+).

Its function is as follows. Has flap endonuclease activity. During DNA replication, flap endonucleases cleave the 5'-overhanging flap structure that is generated by displacement synthesis when DNA polymerase encounters the 5'-end of a downstream Okazaki fragment. This chain is Flap endonuclease Xni, found in Shewanella baltica (strain OS223).